We begin with the raw amino-acid sequence, 121 residues long: MTQINTYFNIADNSGVKKILCIQNLTKKTKKIEIGDLIVGVIKKINNTSKLIYSNIVYGIVIRLKKNINLYKKYNISFNDNSAVLVDKNLNPIGSRIFGTIPKFLKKKNYLKLYSLTVDFI.

The protein belongs to the universal ribosomal protein uL14 family. As to quaternary structure, part of the 50S ribosomal subunit.

It localises to the plastid. It is found in the apicoplast. Functionally, binds to 23S rRNA. This is Large ribosomal subunit protein uL14c (rpl14) from Eimeria tenella (Coccidian parasite).